We begin with the raw amino-acid sequence, 235 residues long: Large ribosomal subunit protein uL1 (235 aa).

The protein belongs to the universal ribosomal protein uL1 family. Part of the 50S ribosomal subunit.

Its function is as follows. Binds directly to 23S rRNA. The L1 stalk is quite mobile in the ribosome, and is involved in E site tRNA release. In terms of biological role, protein L1 is also a translational repressor protein, it controls the translation of the L11 operon by binding to its mRNA. This is Large ribosomal subunit protein uL1 from Synechococcus sp. (strain CC9605).